The sequence spans 319 residues: Phenoxybenzoate dioxygenase subunit beta (319 aa).

The FAD-binding FR-type domain maps to 7-109; it reads MAPVSLRIHA…DGPSNHFALD (103 aa). Position 113–223 (113–223) interacts with NAD(+); sequence PHAVFIAGGI…PARVHLEYFA (111 aa). In terms of domain architecture, 2Fe-2S ferredoxin-type spans 234–319; the sequence is FVVHLARSGR…SKTAELTLDL (86 aa). 4 residues coordinate [2Fe-2S] cluster: C268, C273, C276, and C306.

Belongs to the PDR/VanB family. As to quaternary structure, this dioxygenase system consists of two proteins: the alpha subunit (PobA) and a subunit (PobB) that acts as a ferredoxin and a ferredoxin reductase. The cofactor is FMN.

Its pathway is aromatic compound metabolism; carboxydiphenyl ether degradation. Its function is as follows. Degrades exclusively diarylether compounds having carboxyl groups in the 3- or 4-position. Yields a hemiacetal that spontaneously hydrolyzes to phenol and protocatechuate. This chain is Phenoxybenzoate dioxygenase subunit beta (pobB), found in Ectopseudomonas oleovorans (Pseudomonas oleovorans).